A 186-amino-acid chain; its full sequence is MFKKLDPSPKWIVYDNNPVMHKPIEDVVFPLTKEDEHVISQMLSYVDASYEGEADKYDIRAGIGIAAIQLGCPKKIIYIHLDDKNGEHKYLMANPKIIKESTSKMYLKNGEGCLSVKKDHKGLSIRKSIVWVKGIDLFTNKEIEVKATDLLAACFQHEVDHNNNKFYYNRINESDPYYVEKNWEEI.

Residues cysteine 113 and histidine 157 each coordinate Fe cation. Glutamate 158 is an active-site residue. Residue histidine 161 coordinates Fe cation.

The protein belongs to the polypeptide deformylase family. Requires Fe(2+) as cofactor.

It carries out the reaction N-terminal N-formyl-L-methionyl-[peptide] + H2O = N-terminal L-methionyl-[peptide] + formate. Its function is as follows. Removes the formyl group from the N-terminal Met of newly synthesized proteins. Requires at least a dipeptide for an efficient rate of reaction. N-terminal L-methionine is a prerequisite for activity but the enzyme has broad specificity at other positions. This chain is Peptide deformylase, found in Malacoplasma penetrans (strain HF-2) (Mycoplasma penetrans).